Here is a 293-residue protein sequence, read N- to C-terminus: Small ribosomal subunit protein uS2 (293 aa).

Positions 219–293 (IASAKPDEPY…WATPKTEDWA (75 aa)) are disordered.

Belongs to the universal ribosomal protein uS2 family. In terms of assembly, component of the small ribosomal subunit. Mature ribosomes consist of a small (40S) and a large (60S) subunit. The 40S subunit contains about 33 different proteins and 1 molecule of RNA (18S). The 60S subunit contains about 49 different proteins and 3 molecules of RNA (28S, 5.8S and 5S). Interacts with ribosomal protein S21.

It is found in the cytoplasm. In terms of biological role, required for the assembly and/or stability of the 40S ribosomal subunit. Required for the processing of the 20S rRNA-precursor to mature 18S rRNA in a late step of the maturation of 40S ribosomal subunits. The sequence is that of Small ribosomal subunit protein uS2 from Hydra viridissima (Green hydra).